The chain runs to 623 residues: Flap endonuclease 1 (623 aa).

The interval 1–106 (MGIKGLTKFI…SELEKRGEKR (106 aa)) is N-domain. Position 34 (Asp-34) interacts with Mg(2+). The DNA site is built by Arg-47 and Arg-72. Mg(2+)-binding residues include Asp-88, Glu-160, Glu-162, Asp-181, and Asp-183. The tract at residues 124 to 267 (EIKKQSGRTV…KTAYNLIKEY (144 aa)) is I-domain. Glu-160 lines the DNA pocket. DNA contacts are provided by Gly-245 and Asp-247. Asp-247 is a binding site for Mg(2+). Residues 350 to 358 (TQRRLDNFF) form an interaction with PCNA region. The interval 368-517 (LVIEESQSQS…LSSNSTLHSC (150 aa)) is disordered. Basic and acidic residues-rich tracts occupy residues 410-424 (TKVE…KDEE) and 466-482 (QKSD…KTEQ). A compositionally biased stretch (polar residues) spans 502 to 517 (AGSNTHLSSNSTLHSC).

Belongs to the XPG/RAD2 endonuclease family. FEN1 subfamily. As to quaternary structure, interacts with PCNA. Three molecules of FEN1 bind to one PCNA trimer with each molecule binding to one PCNA monomer. PCNA stimulates the nuclease activity without altering cleavage specificity. It depends on Mg(2+) as a cofactor. In terms of processing, phosphorylated. Phosphorylation upon DNA damage induces relocalization to the nuclear plasma.

The protein localises to the nucleus. It localises to the nucleolus. The protein resides in the nucleoplasm. Its subcellular location is the mitochondrion. Structure-specific nuclease with 5'-flap endonuclease and 5'-3' exonuclease activities involved in DNA replication and repair. During DNA replication, cleaves the 5'-overhanging flap structure that is generated by displacement synthesis when DNA polymerase encounters the 5'-end of a downstream Okazaki fragment. It enters the flap from the 5'-end and then tracks to cleave the flap base, leaving a nick for ligation. Also involved in the long patch base excision repair (LP-BER) pathway, by cleaving within the apurinic/apyrimidinic (AP) site-terminated flap. Acts as a genome stabilization factor that prevents flaps from equilibrating into structures that lead to duplications and deletions. Also possesses 5'-3' exonuclease activity on nicked or gapped double-stranded DNA, and exhibits RNase H activity. Also involved in replication and repair of rDNA and in repairing mitochondrial DNA. This is Flap endonuclease 1 from Plasmodium vivax (strain Salvador I).